The following is a 121-amino-acid chain: RING-box protein HRT1 (121 aa).

Residues 1-31 (MSNEVDRMDVDEDESQNIAQSSNQSAPVETK) form a disordered region. Ser-15 is subject to Phosphoserine. Low complexity predominate over residues 16 to 26 (QNIAQSSNQSA). Residues Cys-55, Cys-58, Cys-66, Cys-69, Cys-81, Cys-88, His-90, His-93, His-95, Cys-107, and Asp-110 each contribute to the Zn(2+) site. Residues 55–111 (CAICRNHIMEPCIECQPKAMTDTDNECVAAWGVCNHAFHLHCINKWIKTRDACPLDN) form an RING-type zinc finger.

It belongs to the RING-box family. As to quaternary structure, component of multiple cullin-RING ligases (CRLs) composed of 4 subunits: the RING protein HRT1, a cullin, a linker protein, and one of many alternative substrate receptors. Component of SCF E3 ubiquitin ligase complexes containing the cullin CDC53, the linker protein SKP1/CBF3D, and substrate receptors containing F-box motifs like DAS1 or GRR1. Component of RTT101(MMS1) E3 ubiquitin ligase complexes containing the cullin RTT101, the linker protein MMS1, and substrate receptors belonging to a protein family described as DCAF (DDB1- and CUL4-associated factor) like MMS22. Component of CRL3 E3 ubiquitin ligase complexes containing the cullin CUL3, the linker protein ELC1, and substrate receptors containing SOCS-box motifs like ELA1. Interacts with CDC53, CUL3, RTT101, CDC4 and CDC34/UBC3.

It is found in the cytoplasm. The protein localises to the nucleus. It participates in protein modification; protein ubiquitination. Core component of multiple cullin-RING-based E3 ubiquitin-protein ligase complexes (CRLs), which mediate the ubiquitination of target proteins. Recruits the E2 ubiquitin-conjugating enzyme CDC34/UBC3 to the complex and brings it into close proximity to the substrate. Also stimulates CDC34/UBC3 autoubiquitination and promotes the neddylation of CDC53 and RTT101. Component of the SCF(CDC4) ubiquitin ligase required for ubiquitination of the cyclin-dependent kinase inhibitor SIC1 and for the G1-to-S phase transition. Component of the RTT101(MMS1-MMS22) ubiquitin ligase that promotes fork progression through damaged DNA or natural pause sites. Component of the CRL3(ELA1) ubiquitin ligase required for ubiquitination of RPB1, the largest subunit of RNA polymerase II (Pol II), which targets Pol II for proteasomal degradation in DNA-damaged cells. The polypeptide is RING-box protein HRT1 (HRT1) (Saccharomyces cerevisiae (strain ATCC 204508 / S288c) (Baker's yeast)).